The chain runs to 134 residues: Retinol-binding protein 2 (134 aa).

All-trans-retinol-binding residues include lysine 41 and glutamine 109.

The protein belongs to the calycin superfamily. Fatty-acid binding protein (FABP) family.

It localises to the cytoplasm. Intracellular transport of retinol. The protein is Retinol-binding protein 2 (RBP2) of Sus scrofa (Pig).